Here is a 345-residue protein sequence, read N- to C-terminus: Sorting nexin-15 (345 aa).

In terms of domain architecture, PX spans 1 to 130 (MSRQAKDDFL…EFFRGGEVTR (130 aa)). Position 105 is an omega-N-methylarginine (Arg105). The tract at residues 133-163 (EVSGDLHILPPPLIPTPPPDEPRVQPHETWL) is disordered. Over residues 141–151 (LPPPLIPTPPP) the composition is skewed to pro residues. Residues Ser208 and Ser234 each carry the phosphoserine modification. Residues 226–274 (SKEEGAGPSPTHIGELAALEAGSGRPDQEPWEPGGQAEEDDEEGEPAPA) form a disordered region. The MIT domain occupies 272–345 (APAYLSQATE…AEEILHLHLS (74 aa)).

It belongs to the sorting nexin family.

Its function is as follows. May be involved in several stages of intracellular trafficking. Overexpression of SNX15 disrupts the normal trafficking of proteins from the plasma membrane to recycling endosomes or the TGN. The protein is Sorting nexin-15 (SNX15) of Bos taurus (Bovine).